Consider the following 283-residue polypeptide: MESFKYCFDNDGKKWIIGNTLYSGNSILYKVRKNFTSSFYNYVMKIDHKSHKPLLSEIRFYISVLDPLTIDNWTRERGIKYLAIPDLYGIGETDDYMFFVIKNLGRVFAPKDTESVFEACVTMINTLEFIHSRGFTHGKIEPRNILIRNKRLSLIDYSRTNKLYKSGNSHIDYNEDMITSGNINYMCVDNHLGATVSRRGDLEMLGYCMIEWFGGKLPWKNESSIKVIKQKKEYKKFIATFFEDCFPEGNEPLELVRYIELVYTLDYSQTPNYDRLRRLFIQD.

ATP-binding residues include M1 and K30. The Protein kinase domain occupies 1 to 283; sequence MESFKYCFDN…DRLRRLFIQD (283 aa).

It belongs to the protein kinase superfamily. Ser/Thr protein kinase family. Poxviruses subfamily. Interacts with B1/VPK1. Interacts with host VRK1. Interacts with host VRK2.

Its subcellular location is the host nucleus. Both catalytically active kinases B1/VPK1 and host VRK2 repress B12 inhibitory activity in a B1/VPK1 deletion mutant strain. In terms of biological role, pseudokinase that plays a role in viral DNA replication repression by activating the antiviral protein BANF1 and inhibiting the activity of host VRK1, a cellular modulator of BANF1. The protein is Pseudokinase OPG198 (OPG198) of Homo sapiens (Human).